The sequence spans 164 residues: Phosphopantetheine adenylyltransferase (164 aa).

Residue S9 coordinates substrate. Residues 9 to 10 and H17 contribute to the ATP site; that span reads SF. Substrate-binding residues include K41, L78, and R92. Residues 93-95, E103, and 128-134 each bind ATP; these read GLR and GRVITST.

It belongs to the bacterial CoaD family. As to quaternary structure, homohexamer. The cofactor is Mg(2+).

It is found in the cytoplasm. The enzyme catalyses (R)-4'-phosphopantetheine + ATP + H(+) = 3'-dephospho-CoA + diphosphate. It participates in cofactor biosynthesis; coenzyme A biosynthesis; CoA from (R)-pantothenate: step 4/5. Functionally, reversibly transfers an adenylyl group from ATP to 4'-phosphopantetheine, yielding dephospho-CoA (dPCoA) and pyrophosphate. This Bartonella bacilliformis (strain ATCC 35685 / KC583 / Herrer 020/F12,63) protein is Phosphopantetheine adenylyltransferase.